The chain runs to 156 residues: Small ribosomal subunit protein uS7 (156 aa).

This sequence belongs to the universal ribosomal protein uS7 family. Part of the 30S ribosomal subunit. Contacts proteins S9 and S11.

One of the primary rRNA binding proteins, it binds directly to 16S rRNA where it nucleates assembly of the head domain of the 30S subunit. Is located at the subunit interface close to the decoding center, probably blocks exit of the E-site tRNA. This Campylobacter hominis (strain ATCC BAA-381 / DSM 21671 / CCUG 45161 / LMG 19568 / NCTC 13146 / CH001A) protein is Small ribosomal subunit protein uS7.